Reading from the N-terminus, the 69-residue chain is UPF0270 protein VCM66_2532 (69 aa).

The protein belongs to the UPF0270 family.

This Vibrio cholerae serotype O1 (strain M66-2) protein is UPF0270 protein VCM66_2532.